A 205-amino-acid polypeptide reads, in one-letter code: GTP cyclohydrolase-2 (205 aa).

49–53 (RIHSE) is a binding site for GTP. Cys-54, Cys-65, and Cys-67 together coordinate Zn(2+). Residues Gln-70, 92–94 (EGR), and Thr-114 contribute to the GTP site. Asp-126 serves as the catalytic Proton acceptor. Arg-128 (nucleophile) is an active-site residue. GTP is bound by residues Thr-149 and Lys-154.

Belongs to the GTP cyclohydrolase II family. Zn(2+) serves as cofactor.

The enzyme catalyses GTP + 4 H2O = 2,5-diamino-6-hydroxy-4-(5-phosphoribosylamino)-pyrimidine + formate + 2 phosphate + 3 H(+). It functions in the pathway cofactor biosynthesis; riboflavin biosynthesis; 5-amino-6-(D-ribitylamino)uracil from GTP: step 1/4. Catalyzes the conversion of GTP to 2,5-diamino-6-ribosylamino-4(3H)-pyrimidinone 5'-phosphate (DARP), formate and pyrophosphate. The protein is GTP cyclohydrolase-2 of Shewanella denitrificans (strain OS217 / ATCC BAA-1090 / DSM 15013).